A 154-amino-acid chain; its full sequence is Jupiter microtubule associated homolog 1 (154 aa).

Position 1 is an N-acetylmethionine (Met1). A compositionally biased stretch (polar residues) spans 1 to 19 (MTTTTTFKGVDPNSRNSSR). Positions 1–154 (MTTTTTFKGV…PGGKSSLVLG (154 aa)) are disordered. Residue Thr2 is modified to N-acetylthreonine; in Hematological and neurological expressed 1 protein, N-terminally processed. A phosphoserine mark is found at Ser28 and Ser31. Position 54 is a phosphothreonine (Thr54). Residues Ser71, Ser87, Ser88, and Ser92 each carry the phosphoserine modification. Polar residues predominate over residues 79-91 (SPGTQRSNSSEAS). Over residues 96-108 (LDLKGEGDMHENV) the composition is skewed to basic and acidic residues. Positions 125-138 (PAAPVPSPVAPAPV) are enriched in pro residues. The residue at position 131 (Ser131) is a Phosphoserine. Lys148 carries the N6-acetyllysine modification.

The protein belongs to the JUPITER family. As to quaternary structure, interacts with the complex composed, at least, of APC, CTNNB1 and GSK3B; the interaction takes place with the inactive form of GSK3B (phosphorylated at 'Ser-9'). In terms of tissue distribution, expressed in yolk sac, fetal brain, brain, spleen and bone marrow.

It localises to the nucleus. It is found in the cytoplasm. Modulates negatively AKT-mediated GSK3B signaling. Induces CTNNB1 'Ser-33' phosphorylation and degradation through the suppression of the inhibitory 'Ser-9' phosphorylation of GSK3B, which represses the function of the APC:CTNNB1:GSK3B complex and the interaction with CDH1/E-cadherin in adherent junctions. Plays a role in the regulation of cell cycle and cell adhesion. Has an inhibitory role on AR-signaling pathway through the induction of receptor proteasomal degradation. The sequence is that of Jupiter microtubule associated homolog 1 from Mus musculus (Mouse).